The primary structure comprises 666 residues: Chaperone protein dnaK1 (666 aa).

Residue Thr-198 is modified to Phosphothreonine; by autocatalysis.

The protein belongs to the heat shock protein 70 family.

Functionally, acts as a chaperone. This is Chaperone protein dnaK1 (dnaK1) from Prochlorococcus marinus (strain SARG / CCMP1375 / SS120).